Here is a 149-residue protein sequence, read N- to C-terminus: Ribonuclease H (149 aa).

One can recognise an RNase H type-1 domain in the interval 1–141 (MKTVTLFSDG…CDTMAREKAT (141 aa)). The Mg(2+) site is built by aspartate 9, glutamate 47, aspartate 69, and aspartate 133.

It belongs to the RNase H family. In terms of assembly, monomer. The cofactor is Mg(2+).

The protein resides in the cytoplasm. It carries out the reaction Endonucleolytic cleavage to 5'-phosphomonoester.. Functionally, endonuclease that specifically degrades the RNA of RNA-DNA hybrids. This chain is Ribonuclease H, found in Campylobacter curvus (strain 525.92).